Here is a 263-residue protein sequence, read N- to C-terminus: Phosphatidylserine decarboxylase proenzyme (263 aa).

Residues aspartate 90, histidine 146, and serine 230 each act as charge relay system; for autoendoproteolytic cleavage activity in the active site. Serine 230 functions as the Schiff-base intermediate with substrate; via pyruvic acid; for decarboxylase activity in the catalytic mechanism. At serine 230 the chain carries Pyruvic acid (Ser); by autocatalysis.

The protein belongs to the phosphatidylserine decarboxylase family. PSD-B subfamily. Prokaryotic type I sub-subfamily. In terms of assembly, heterodimer of a large membrane-associated beta subunit and a small pyruvoyl-containing alpha subunit. It depends on pyruvate as a cofactor. Is synthesized initially as an inactive proenzyme. Formation of the active enzyme involves a self-maturation process in which the active site pyruvoyl group is generated from an internal serine residue via an autocatalytic post-translational modification. Two non-identical subunits are generated from the proenzyme in this reaction, and the pyruvate is formed at the N-terminus of the alpha chain, which is derived from the carboxyl end of the proenzyme. The autoendoproteolytic cleavage occurs by a canonical serine protease mechanism, in which the side chain hydroxyl group of the serine supplies its oxygen atom to form the C-terminus of the beta chain, while the remainder of the serine residue undergoes an oxidative deamination to produce ammonia and the pyruvoyl prosthetic group on the alpha chain. During this reaction, the Ser that is part of the protease active site of the proenzyme becomes the pyruvoyl prosthetic group, which constitutes an essential element of the active site of the mature decarboxylase.

It is found in the cell membrane. It carries out the reaction a 1,2-diacyl-sn-glycero-3-phospho-L-serine + H(+) = a 1,2-diacyl-sn-glycero-3-phosphoethanolamine + CO2. The protein operates within phospholipid metabolism; phosphatidylethanolamine biosynthesis; phosphatidylethanolamine from CDP-diacylglycerol: step 2/2. Catalyzes the formation of phosphatidylethanolamine (PtdEtn) from phosphatidylserine (PtdSer). The protein is Phosphatidylserine decarboxylase proenzyme of Bacillus subtilis (strain 168).